A 1755-amino-acid polypeptide reads, in one-letter code: Transposon Ty1-JR1 Gag-Pol polyprotein (1755 aa).

Over residues 1–16 (MESQQLSQHSHISHGS) the composition is skewed to low complexity. Disordered regions lie at residues 1-93 (MESQ…MMTQ), 126-173 (PQSQ…RPPP), and 352-421 (GSRN…SKST). Polar residues-rich tracts occupy residues 48–60 (TKAN…TPAS) and 127–152 (QSQF…GNTF). Over residues 153–165 (TDSSSADSDMTST) the composition is skewed to low complexity. Residues 299–401 (NNGIHINNKV…NSKSKTARAH (103 aa)) are RNA-binding. Positions 402 to 418 (NVSTSNNSPSTDNDSIS) are enriched in low complexity. Phosphoserine is present on Ser416. Asp461 functions as the For protease activity; shared with dimeric partner in the catalytic mechanism. An integrase-type zinc finger-like region spans residues 583–640 (NVHTSESTRKYPYPFIHRMLAHANAQTIRYSLKNNTITYFNESDVDWSSAIDYQCPDC). An Integrase catalytic domain is found at 660-835 (NSYEPFQYLH…AGLDISTLLP (176 aa)). Residues Asp671 and Asp736 each contribute to the Mg(2+) site. Disordered stretches follow at residues 956 to 1087 (SKAV…ETEK), 1092 to 1111 (RSPS…NIVP), and 1130 to 1186 (DLPL…EDNE). The segment covering 960–969 (SPTDSTPPST) has biased composition (low complexity). Residues 1005–1015 (STPQISNIEST) show a composition bias toward polar residues. Residues 1038-1053 (ESSHASKSKDFRHSDS) are compositionally biased toward basic and acidic residues. Composition is skewed to polar residues over residues 1054 to 1082 (YSEN…QISD) and 1101 to 1111 (PENNSSHNIVP). Residues 1178–1212 (KKRSLEDNETEIKVSRDTWNTKNMRSLEPPRSKKR) carry the Bipartite nuclear localization signal motif. The region spanning 1338 to 1476 (NNYYITQLDI…DILGLEIKYQ (139 aa)) is the Reverse transcriptase Ty1/copia-type domain. Residues Asp1346, Asp1427, Asp1428, Asp1610, Glu1652, and Asp1685 each contribute to the Mg(2+) site. One can recognise an RNase H Ty1/copia-type domain in the interval 1610 to 1752 (DASYGNQPYY…IKTFKLLTNK (143 aa)).

As to quaternary structure, the capsid protein forms a homotrimer, from which the VLPs are assembled. The protease is a homodimer, whose active site consists of two apposed aspartic acid residues. In terms of processing, initially, virus-like particles (VLPs) are composed of the structural unprocessed proteins Gag and Gag-Pol, and also contain the host initiator methionine tRNA (tRNA(i)-Met) which serves as a primer for minus-strand DNA synthesis, and a dimer of genomic Ty RNA. Processing of the polyproteins occurs within the particle and proceeds by an ordered pathway, called maturation. First, the protease (PR) is released by autocatalytic cleavage of the Gag-Pol polyprotein yielding capsid protein p45 and a Pol-p154 precursor protein. This cleavage is a prerequisite for subsequent processing of Pol-p154 at the remaining sites to release the mature structural and catalytic proteins. Maturation takes place prior to the RT reaction and is required to produce transposition-competent VLPs.

The protein localises to the cytoplasm. It is found in the nucleus. It catalyses the reaction DNA(n) + a 2'-deoxyribonucleoside 5'-triphosphate = DNA(n+1) + diphosphate. It carries out the reaction Endonucleolytic cleavage to 5'-phosphomonoester.. In terms of biological role, capsid protein (CA) is the structural component of the virus-like particle (VLP), forming the shell that encapsulates the retrotransposons dimeric RNA genome. The particles are assembled from trimer-clustered units and there are holes in the capsid shells that allow for the diffusion of macromolecules. CA also has nucleocapsid-like chaperone activity, promoting primer tRNA(i)-Met annealing to the multipartite primer-binding site (PBS), dimerization of Ty1 RNA and initiation of reverse transcription. Its function is as follows. The aspartyl protease (PR) mediates the proteolytic cleavages of the Gag and Gag-Pol polyproteins after assembly of the VLP. Functionally, reverse transcriptase/ribonuclease H (RT) is a multifunctional enzyme that catalyzes the conversion of the retro-elements RNA genome into dsDNA within the VLP. The enzyme displays a DNA polymerase activity that can copy either DNA or RNA templates, and a ribonuclease H (RNase H) activity that cleaves the RNA strand of RNA-DNA heteroduplexes during plus-strand synthesis and hydrolyzes RNA primers. The conversion leads to a linear dsDNA copy of the retrotransposon that includes long terminal repeats (LTRs) at both ends. Integrase (IN) targets the VLP to the nucleus, where a subparticle preintegration complex (PIC) containing at least integrase and the newly synthesized dsDNA copy of the retrotransposon must transit the nuclear membrane. Once in the nucleus, integrase performs the integration of the dsDNA into the host genome. The polypeptide is Transposon Ty1-JR1 Gag-Pol polyprotein (TY1B-JR1) (Saccharomyces cerevisiae (strain ATCC 204508 / S288c) (Baker's yeast)).